Consider the following 559-residue polypeptide: MKRELLCVLLLCGLAFPLPDQGIHGRFRRGARSYRATCRDEPTQTTYQQHQSWLRPMLRSSRVEYCRCNSGLVQCHSVPVRSCSEPRCFNGGTCQQALYFSDFVCQCPDGFVGKRCDIDTRATCFEEQGITYRGTWSTAESGAECINWNSSVLSLKPYNARRPNAIKLGLGNHNYCRNPDRDLKPWCYVFKAGKYTTEFCSTPACPKGKSEDCYVGKGVTYRGTHSLTTSQASCLPWNSIVLMGKSYTAWRTNSQALGLGRHNYCRNPDGDARPWCHVMKDRKLTWEYCDMSPCSTCGLRQYKRPQFRIKGGLYTDITSHPWQAAIFVKNKRSPGERFLCGGVLISSCWVLSAAHCFLERFPPNHLKVVLGRTYRVVPGEEEQTFEIEKYIVHEEFDDDTYDNDIALLQLRSQSKQCAQESSSVGTACLPDPNLQLPDWTECELSGYGKHEASSPFFSDRLKEAHVRLYPSSRCTSQHLFNKTVTNNMLCAGDTRSGGNQDLHDACQGDSGGPLVCMINKQMTLTGIISWGLGCGQKDVPGVYTKVTNYLDWIHDNMKQ.

The signal sequence occupies residues 1 to 17; that stretch reads MKRELLCVLLLCGLAFP. Positions 18–29 are excised as a propeptide; sequence LPDQGIHGRFRR. Positions 30–32 are cleaved as a propeptide — removed by plasmin; it reads GAR. Residues 36–78 enclose the Fibronectin type-I domain; sequence ATCRDEPTQTTYQQHQSWLRPMLRSSRVEYCRCNSGLVQCHSV. Disulfide bonds link Cys-38/Cys-68, Cys-66/Cys-75, Cys-83/Cys-94, Cys-88/Cys-105, Cys-107/Cys-116, Cys-124/Cys-205, Cys-145/Cys-187, Cys-176/Cys-200, Cys-213/Cys-294, Cys-234/Cys-276, Cys-265/Cys-289, Cys-297/Cys-428, Cys-340/Cys-356, Cys-348/Cys-417, Cys-442/Cys-516, Cys-474/Cys-490, and Cys-506/Cys-534. Positions 39–49 are important for binding to annexin A2; sequence RDEPTQTTYQQ. The EGF-like domain occupies 79–117; sequence PVRSCSEPRCFNGGTCQQALYFSDFVCQCPDGFVGKRCD. Kringle domains follow at residues 124-205 and 213-294; these read CFEE…TPAC and CYVG…MSPC. Residue Asn-149 is glycosylated (N-linked (GlcNAc...) asparagine). The 250-residue stretch at 309–558 folds into the Peptidase S1 domain; sequence IKGGLYTDIT…YLDWIHDNMK (250 aa). Catalysis depends on charge relay system residues His-355 and Asp-404. Asn-481 carries N-linked (GlcNAc...) asparagine glycosylation. Catalysis depends on Ser-510, which acts as the Charge relay system.

The protein belongs to the peptidase S1 family. In terms of assembly, heterodimer of chain A and chain B held by a disulfide bond. Binds to fibrin with high affinity. This interaction leads to an increase in the catalytic efficiency of the enzyme due to an increase in affinity for plasminogen. Similarly, binding to heparin increases the activation of plasminogen. Binds to annexin A2, cytokeratin-8, fibronectin and laminin. Binds to mannose receptor and the low-density lipoprotein receptor-related protein (LRP1); these proteins are involved in TPA clearance. Binds LRP1B; binding is followed by internalization and degradation. Forms heterodimer with SERPINA5. Interacts with SERPINE1. In complex with SERPINE1, interacts with SORL1. The single chain, almost fully active enzyme, can be further processed into a two-chain fully active form by a cleavage after Arg-308 catalyzed by plasmin, tissue kallikrein or factor Xa.

Its subcellular location is the secreted. It is found in the extracellular space. The enzyme catalyses Specific cleavage of Arg-|-Val bond in plasminogen to form plasmin.. With respect to regulation, inhibited by SERPINA5. Inhibited by SERPINE1. Functionally, converts the abundant, but inactive, zymogen plasminogen to plasmin by hydrolyzing a single Arg-Val bond in plasminogen. By controlling plasmin-mediated proteolysis, it plays an important role in tissue remodeling and degradation, in cell migration and many other physiopathological events. During oocyte activation, plays a role in cortical granule reaction in the zona reaction, which contributes to the block to polyspermy. In Mus musculus (Mouse), this protein is Tissue-type plasminogen activator (Plat).